We begin with the raw amino-acid sequence, 428 residues long: Light-independent protochlorophyllide reductase subunit N (428 aa).

[4Fe-4S] cluster is bound by residues cysteine 29, cysteine 54, and cysteine 115.

Belongs to the BchN/ChlN family. In terms of assembly, protochlorophyllide reductase is composed of three subunits; BchL, BchN and BchB. Forms a heterotetramer of two BchB and two BchN subunits. The cofactor is [4Fe-4S] cluster.

The enzyme catalyses chlorophyllide a + oxidized 2[4Fe-4S]-[ferredoxin] + 2 ADP + 2 phosphate = protochlorophyllide a + reduced 2[4Fe-4S]-[ferredoxin] + 2 ATP + 2 H2O. It participates in porphyrin-containing compound metabolism; bacteriochlorophyll biosynthesis (light-independent). Component of the dark-operative protochlorophyllide reductase (DPOR) that uses Mg-ATP and reduced ferredoxin to reduce ring D of protochlorophyllide (Pchlide) to form chlorophyllide a (Chlide). This reaction is light-independent. The NB-protein (BchN-BchB) is the catalytic component of the complex. The polypeptide is Light-independent protochlorophyllide reductase subunit N (Roseobacter denitrificans (strain ATCC 33942 / OCh 114) (Erythrobacter sp. (strain OCh 114))).